Consider the following 414-residue polypeptide: Probable sugar-binding periplasmic protein (414 aa).

Positions 1 to 22 are cleaved as a signal peptide; it reads MRKFMTTTAVAALMLAATAARA.

The protein belongs to the bacterial solute-binding protein 1 family.

The protein resides in the periplasm. Its function is as follows. Part of a binding-protein-dependent transport system for a sugar. This Rhizobium meliloti (strain 1021) (Ensifer meliloti) protein is Probable sugar-binding periplasmic protein.